A 412-amino-acid polypeptide reads, in one-letter code: Aspartate kinase Ask_LysC (412 aa).

Residues 265–332 (LTIRGVPDTP…QGIAAEMGAR (68 aa)) enclose the ACT domain.

This sequence belongs to the aspartokinase family.

It is found in the cytoplasm. The catalysed reaction is L-aspartate + ATP = 4-phospho-L-aspartate + ADP. It participates in amino-acid biosynthesis; L-lysine biosynthesis via DAP pathway; (S)-tetrahydrodipicolinate from L-aspartate: step 1/4. The protein operates within amino-acid biosynthesis; L-methionine biosynthesis via de novo pathway; L-homoserine from L-aspartate: step 1/3. Its pathway is amino-acid biosynthesis; L-threonine biosynthesis; L-threonine from L-aspartate: step 1/5. Its activity is regulated as follows. Allosterically and strongly feedback inhibited by tryptophan. Addition of lysine alone slightly enhances activity. The simultaneous addition of lysine and tryptophan leads to very strong feedback inhibition of the enzyme. The feedback control by tryptophan is reduced in the presence of the compatible solutes hydroxyectoine or ectoine. In terms of biological role, involved in the biosynthesis of L-aspartate-beta-semialdehyde which is a central intermediate in the biosynthesis of different amino acids (L-lysine, L-methionine, L-threonine). Catalyzes the phosphorylation of the beta-carboxyl group of L-aspartate to yield 4-phospho-L-aspartate. The polypeptide is Aspartate kinase Ask_LysC (lysC) (Stutzerimonas stutzeri (strain A1501) (Pseudomonas stutzeri)).